An 85-amino-acid polypeptide reads, in one-letter code: CRISPR-associated endoribonuclease Cas2 2 (85 aa).

Asp-8 contributes to the Mg(2+) binding site.

The protein belongs to the CRISPR-associated endoribonuclease Cas2 protein family. Homodimer, forms a heterotetramer with a Cas1 homodimer. Mg(2+) serves as cofactor.

Functionally, CRISPR (clustered regularly interspaced short palindromic repeat), is an adaptive immune system that provides protection against mobile genetic elements (viruses, transposable elements and conjugative plasmids). CRISPR clusters contain sequences complementary to antecedent mobile elements and target invading nucleic acids. CRISPR clusters are transcribed and processed into CRISPR RNA (crRNA). Functions as a ssRNA-specific endoribonuclease. Involved in the integration of spacer DNA into the CRISPR cassette. This Chloroflexus aurantiacus (strain ATCC 29366 / DSM 635 / J-10-fl) protein is CRISPR-associated endoribonuclease Cas2 2.